Consider the following 285-residue polypeptide: Ribosomal RNA small subunit methyltransferase I (285 aa).

It belongs to the methyltransferase superfamily. RsmI family.

It is found in the cytoplasm. It carries out the reaction cytidine(1402) in 16S rRNA + S-adenosyl-L-methionine = 2'-O-methylcytidine(1402) in 16S rRNA + S-adenosyl-L-homocysteine + H(+). Functionally, catalyzes the 2'-O-methylation of the ribose of cytidine 1402 (C1402) in 16S rRNA. This is Ribosomal RNA small subunit methyltransferase I from Mycobacterium tuberculosis (strain CDC 1551 / Oshkosh).